A 120-amino-acid polypeptide reads, in one-letter code: Small ribosomal subunit protein uS13 (120 aa).

Residues 96 to 120 (PCRGQRTRTNARTRKGPRKAIAGKK) are disordered.

Belongs to the universal ribosomal protein uS13 family. In terms of assembly, part of the 30S ribosomal subunit. Forms a loose heterodimer with protein S19. Forms two bridges to the 50S subunit in the 70S ribosome.

Its function is as follows. Located at the top of the head of the 30S subunit, it contacts several helices of the 16S rRNA. In the 70S ribosome it contacts the 23S rRNA (bridge B1a) and protein L5 of the 50S subunit (bridge B1b), connecting the 2 subunits; these bridges are implicated in subunit movement. Contacts the tRNAs in the A and P-sites. The polypeptide is Small ribosomal subunit protein uS13 (Chromobacterium violaceum (strain ATCC 12472 / DSM 30191 / JCM 1249 / CCUG 213 / NBRC 12614 / NCIMB 9131 / NCTC 9757 / MK)).